We begin with the raw amino-acid sequence, 304 residues long: Protein Largen (304 aa).

The segment covering 1–13 has biased composition (polar residues); that stretch reads MSAKSKGNPSSSC. Disordered regions lie at residues 1-27, 66-91, 114-160, and 239-304; these read MSAKSKGNPSSSCPAEGPPAASKTKVK, QLEDEMTDSSKTDTLNSSSSGTTASS, LTVL…GGLP, and HPPG…TTTV. Positions 33-70 form a coiled coil; it reads IVEDLELVLGDLKDVAKELKEVVDQIDTLTSDLQLEDE. The segment covering 77 to 91 has biased composition (low complexity); the sequence is TDTLNSSSSGTTASS. Pro residues-rich tracts occupy residues 120 to 129, 239 to 261, and 277 to 289; these read PNPPPPPPRL, HPPGKIPHQGPPLPPTPHLPPFP, and PIRPATVPPPTAP.

Its function is as follows. Regulator of cell size that promotes cell size increase independently of mTOR and Hippo signaling pathways. Acts by stimulating the translation of specific mRNAs, including those encoding proteins affecting mitochondrial functions. Increases mitochondrial mass and respiration. The sequence is that of Protein Largen (PRR16) from Homo sapiens (Human).